The following is a 194-amino-acid chain: tRNA (guanosine(18)-2'-O)-methyltransferase (194 aa).

S-adenosyl-L-methionine contacts are provided by residues threonine 99, 122-126 (GAEKW), isoleucine 142, and leucine 151.

This sequence belongs to the class IV-like SAM-binding methyltransferase superfamily. RNA methyltransferase TrmH family. As to quaternary structure, monomer.

It carries out the reaction guanosine(18) in tRNA + S-adenosyl-L-methionine = 2'-O-methylguanosine(18) in tRNA + S-adenosyl-L-homocysteine + H(+). With respect to regulation, stimulated by magnesium ions and spermine. Inhibited by S-adenosyl-homocysteine. Its function is as follows. Catalyzes the 2'-O methylation of guanosine at position 18 in tRNA. This Thermus thermophilus (strain ATCC BAA-163 / DSM 7039 / HB27) protein is tRNA (guanosine(18)-2'-O)-methyltransferase.